The primary structure comprises 434 residues: Sodium/bile acid cotransporter 5 (434 aa).

The first 18 residues, 1–18 (MSGKLFIILLLLVTPGEA), serve as a signal peptide directing secretion. Residues 19–129 (RKSFLRFLNI…VSVFRQTEDS (111 aa)) are Extracellular-facing. Asn-73 and Asn-96 each carry an N-linked (GlcNAc...) asparagine glycan. The chain crosses the membrane as a helical span at residues 130 to 150 (LFQEPIHVNSSVFLLVLLMIL). Residues 151-172 (LNKCAFGCKIELQVLQTVWKRP) lie on the Cytoplasmic side of the membrane. A helical transmembrane segment spans residues 173 to 193 (LPILLGAVTQFFLMPFCGFLL). Residues 194-195 (SQ) are Extracellular-facing. A helical membrane pass occupies residues 196-216 (ILGLSKAQAFGFVMTCTCPGG). Residues 217–232 (GGGYLFALLLEGDVTL) lie on the Cytoplasmic side of the membrane. Residues 233-255 (AILMACTSTSLALIMMPVNSYLY) traverse the membrane as a helical segment. Residues 256 to 268 (SCLLGLAGVFHVP) lie on the Extracellular side of the membrane. The helical transmembrane segment at 269-289 (VLKIVSTLLFILTPVSIGIVI) threads the bilayer. Residues 290–306 (KHRMPKKAVCLERVVQP) lie on the Cytoplasmic side of the membrane. The helical transmembrane segment at 307-327 (LSLTLMLVGVYLAFRMGLVFL) threads the bilayer. Residues 328–331 (RMAN) are Extracellular-facing. The chain crosses the membrane as a helical span at residues 332–352 (LEVFLLGLLVPVLGFSFGYSF). Residues 353 to 365 (AKVYLLPLPVCKT) lie on the Cytoplasmic side of the membrane. A helical transmembrane segment spans residues 366–386 (VAIESGMLNSFLALAIIQLSF). The Extracellular portion of the chain corresponds to 387-395 (PQSKAYEAS). Residues 396–416 (VAPFTVAMCSSCEMLLLLLVY) form a helical membrane-spanning segment. At 417 to 434 (KAKKRPLLSTENEKAPLV) the chain is on the cytoplasmic side.

Belongs to the bile acid:sodium symporter (BASS) (TC 2.A.28) family.

It is found in the membrane. This chain is Sodium/bile acid cotransporter 5 (Slc10a5), found in Rattus norvegicus (Rat).